The following is a 717-amino-acid chain: PAN2-PAN3 deadenylation complex subunit PAN3 (717 aa).

The C3H1-type zinc-finger motif lies at 8-37 (WARDVPCRNVIIYGFCKKKTEGCPFKHDDD). The segment at 37-100 (DDIATPTSTP…HTGSKSQVPK (64 aa)) is disordered. The segment covering 62 to 90 (PSKISVSSLPSLNSQPSSTAPTSAPNATA) has biased composition (low complexity). Polar residues predominate over residues 91–100 (HTGSKSQVPK). The interval 323 to 585 (QLFPSGGNLP…ATIIEKYIGL (263 aa)) is pseudokinase domain. ATP contacts are provided by residues Arg-378, 428–435 (DYYPNATS), and 482–483 (DK). Residues 586-624 (DVVFKVMEAQQTYSEYAENVLSRELENGRLFRLICKLNF) are a coiled coil. The segment at 625–717 (IFGRVENRLD…VDKTFRAMTL (93 aa)) is knob domain.

The protein belongs to the protein kinase superfamily. PAN3 family. As to quaternary structure, homodimer. Forms a heterotrimer with a catalytic subunit PAN2 to form the poly(A)-nuclease (PAN) deadenylation complex. Interacts (via PAM-2 motif) with poly(A)-binding protein PAB1 (via PABC domain), conferring substrate specificity of the enzyme complex.

It is found in the cytoplasm. Regulatory subunit of the poly(A)-nuclease (PAN) deadenylation complex, one of two cytoplasmic mRNA deadenylases involved in mRNA turnover. PAN specifically shortens poly(A) tails of RNA and the activity is stimulated by poly(A)-binding protein PAB1. PAN deadenylation is followed by rapid degradation of the shortened mRNA tails by the CCR4-NOT complex. Deadenylated mRNAs are then degraded by two alternative mechanisms, namely exosome-mediated 3'-5' exonucleolytic degradation, or deadenylation-dependent mRNA decaping and subsequent 5'-3' exonucleolytic degradation by XRN1. May also be involved in post-transcriptional maturation of mRNA poly(A) tails. PAN3 acts as a positive regulator for PAN activity, recruiting the catalytic subunit PAN2 to mRNA via its interaction with RNA and with PAB1. The protein is PAN2-PAN3 deadenylation complex subunit PAN3 of Candida glabrata (strain ATCC 2001 / BCRC 20586 / JCM 3761 / NBRC 0622 / NRRL Y-65 / CBS 138) (Yeast).